A 396-amino-acid chain; its full sequence is Actin-related protein 6 (396 aa).

The residue at position 2 (threonine 2) is an N-acetylthreonine. The residue at position 260 (lysine 260) is an N6-acetyllysine.

It belongs to the actin family. ARP6 subfamily. In terms of assembly, component of the chromatin-remodeling SRCAP complex composed of at least SRCAP, DMAP1, RUVBL1, RUVBL2, ACTL6A, YEATS4, ACTR6 and ZNHIT1. Interacts with CBX1, CBX3 and CBX5.

Its subcellular location is the cytoplasm. It localises to the cytoskeleton. The protein localises to the nucleus. It is found in the nucleolus. Required for formation and/or maintenance of proper nucleolar structure and function. Plays a dual role in the regulation of ribosomal DNA (rDNA) transcription. In the presence of high glucose, maintains active rDNA transcription through H2A.Z deposition and under glucose starvation, is required for the repression of rDNA transcription, and this function may be independent of H2A.Z. This chain is Actin-related protein 6 (ACTR6), found in Homo sapiens (Human).